A 227-amino-acid chain; its full sequence is Cytochrome c oxidase subunit 2 (227 aa).

Topologically, residues 1 to 14 are mitochondrial intermembrane; sequence MAYPFQLGLQDATS. The helical transmembrane segment at 15–45 threads the bilayer; that stretch reads PIMEELMNFHDHTLMIVFLISSLVLYIISLM. Residues 46–59 lie on the Mitochondrial matrix side of the membrane; sequence LTTKLTHTSTMDAQ. Residues 60-87 traverse the membrane as a helical segment; that stretch reads EVETIWTILPAAILILIALPSLRILYMM. Over 88–227 the chain is Mitochondrial intermembrane; it reads DEINNPVLTV…YFENWSASMI (140 aa). 6 residues coordinate Cu cation: histidine 161, cysteine 196, glutamate 198, cysteine 200, histidine 204, and methionine 207. Glutamate 198 is a Mg(2+) binding site.

It belongs to the cytochrome c oxidase subunit 2 family. Component of the cytochrome c oxidase (complex IV, CIV), a multisubunit enzyme composed of 14 subunits. The complex is composed of a catalytic core of 3 subunits MT-CO1, MT-CO2 and MT-CO3, encoded in the mitochondrial DNA, and 11 supernumerary subunits COX4I, COX5A, COX5B, COX6A, COX6B, COX6C, COX7A, COX7B, COX7C, COX8 and NDUFA4, which are encoded in the nuclear genome. The complex exists as a monomer or a dimer and forms supercomplexes (SCs) in the inner mitochondrial membrane with NADH-ubiquinone oxidoreductase (complex I, CI) and ubiquinol-cytochrome c oxidoreductase (cytochrome b-c1 complex, complex III, CIII), resulting in different assemblies (supercomplex SCI(1)III(2)IV(1) and megacomplex MCI(2)III(2)IV(2)). Found in a complex with TMEM177, COA6, COX18, COX20, SCO1 and SCO2. Interacts with TMEM177 in a COX20-dependent manner. Interacts with COX20. Interacts with COX16. The cofactor is Cu cation.

It is found in the mitochondrion inner membrane. It carries out the reaction 4 Fe(II)-[cytochrome c] + O2 + 8 H(+)(in) = 4 Fe(III)-[cytochrome c] + 2 H2O + 4 H(+)(out). In terms of biological role, component of the cytochrome c oxidase, the last enzyme in the mitochondrial electron transport chain which drives oxidative phosphorylation. The respiratory chain contains 3 multisubunit complexes succinate dehydrogenase (complex II, CII), ubiquinol-cytochrome c oxidoreductase (cytochrome b-c1 complex, complex III, CIII) and cytochrome c oxidase (complex IV, CIV), that cooperate to transfer electrons derived from NADH and succinate to molecular oxygen, creating an electrochemical gradient over the inner membrane that drives transmembrane transport and the ATP synthase. Cytochrome c oxidase is the component of the respiratory chain that catalyzes the reduction of oxygen to water. Electrons originating from reduced cytochrome c in the intermembrane space (IMS) are transferred via the dinuclear copper A center (CU(A)) of subunit 2 and heme A of subunit 1 to the active site in subunit 1, a binuclear center (BNC) formed by heme A3 and copper B (CU(B)). The BNC reduces molecular oxygen to 2 water molecules using 4 electrons from cytochrome c in the IMS and 4 protons from the mitochondrial matrix. The polypeptide is Cytochrome c oxidase subunit 2 (MT-CO2) (Leggadina forresti (Forrest's mouse)).